We begin with the raw amino-acid sequence, 75 residues long: Protein EGO2 (75 aa).

This chain is Protein EGO2, found in Saccharomyces cerevisiae (strain ATCC 204508 / S288c) (Baker's yeast).